The primary structure comprises 371 residues: Dihydroorotate dehydrogenase (quinone) (371 aa).

FMN contacts are provided by residues 79 to 83 (AGFDK) and T103. K83 contacts substrate. A substrate-binding site is contributed by 128-132 (NRMGF). N156 and N189 together coordinate FMN. N189 contributes to the substrate binding site. The Nucleophile role is filled by S192. N194 contributes to the substrate binding site. K225 and T253 together coordinate FMN. A substrate-binding site is contributed by 254-255 (NT). FMN is bound by residues G279, G308, and 329-330 (YT).

This sequence belongs to the dihydroorotate dehydrogenase family. Type 2 subfamily. As to quaternary structure, monomer. FMN is required as a cofactor.

The protein resides in the cell membrane. It carries out the reaction (S)-dihydroorotate + a quinone = orotate + a quinol. It functions in the pathway pyrimidine metabolism; UMP biosynthesis via de novo pathway; orotate from (S)-dihydroorotate (quinone route): step 1/1. Functionally, catalyzes the conversion of dihydroorotate to orotate with quinone as electron acceptor. The protein is Dihydroorotate dehydrogenase (quinone) of Corynebacterium glutamicum (strain R).